The primary structure comprises 315 residues: Glutaminase (315 aa).

The substrate site is built by Ser70, Asn120, Glu166, Asn173, Tyr197, Tyr249, and Val267.

It belongs to the glutaminase family. Homotetramer.

The enzyme catalyses L-glutamine + H2O = L-glutamate + NH4(+). In Sinorhizobium fredii (strain NBRC 101917 / NGR234), this protein is Glutaminase.